The primary structure comprises 407 residues: Arrestin red cell isoform 1 (407 aa).

This sequence belongs to the arrestin family.

The protein localises to the cytoplasm. The polypeptide is Arrestin red cell isoform 1 (Oncorhynchus mykiss (Rainbow trout)).